A 529-amino-acid polypeptide reads, in one-letter code: Peptide chain release factor 3 (529 aa).

The 270-residue stretch at 11–280 folds into the tr-type G domain; sequence AKRRTFAIIS…GLVEWAPAPM (270 aa). Residues 20–27, 88–92, and 142–145 each bind GTP; these read SHPDAGKT, DTPGH, and NKLD.

It belongs to the TRAFAC class translation factor GTPase superfamily. Classic translation factor GTPase family. PrfC subfamily.

It is found in the cytoplasm. Increases the formation of ribosomal termination complexes and stimulates activities of RF-1 and RF-2. It binds guanine nucleotides and has strong preference for UGA stop codons. It may interact directly with the ribosome. The stimulation of RF-1 and RF-2 is significantly reduced by GTP and GDP, but not by GMP. In Salmonella arizonae (strain ATCC BAA-731 / CDC346-86 / RSK2980), this protein is Peptide chain release factor 3.